The primary structure comprises 355 residues: Arginine kinase (355 aa).

The region spanning Thr6–Asn90 is the Phosphagen kinase N-terminal domain. Gly63–Tyr67 contacts substrate. The 238-residue stretch at Phe118 to Leu355 folds into the Phosphagen kinase C-terminal domain. ATP contacts are provided by residues Ser121 to Arg125 and His184. Residue Glu224 coordinates substrate. Position 228 (Arg228) interacts with ATP. Cys270 contacts substrate. ATP is bound by residues Arg279–His283 and Arg308–Glu313. Residue Glu313 coordinates substrate.

It belongs to the ATP:guanido phosphotransferase family.

The catalysed reaction is L-arginine + ATP = N(omega)-phospho-L-arginine + ADP + H(+). The chain is Arginine kinase (ARGK) from Plodia interpunctella (Indianmeal moth).